The sequence spans 377 residues: UPF0754 membrane protein BPUM_0927 (377 aa).

A run of 2 helical transmembrane segments spans residues 1 to 21 (MNIFTTFLFMIVIGAVIGAAT) and 357 to 377 (FLGGFLGGLIGAIQAIFVTLF).

Belongs to the UPF0754 family.

The protein resides in the cell membrane. The chain is UPF0754 membrane protein BPUM_0927 from Bacillus pumilus (strain SAFR-032).